Reading from the N-terminus, the 452-residue chain is tRNA modification GTPase MnmE (452 aa).

The (6S)-5-formyl-5,6,7,8-tetrahydrofolate site is built by R21, E78, and K118. In terms of domain architecture, TrmE-type G spans G214 to G375. N224 contributes to the K(+) binding site. Residues N224–S229, T243–T249, and D268–G271 each bind GTP. S228 contributes to the Mg(2+) binding site. 3 residues coordinate K(+): T243, I245, and T248. Residue T249 coordinates Mg(2+). K452 provides a ligand contact to (6S)-5-formyl-5,6,7,8-tetrahydrofolate.

Belongs to the TRAFAC class TrmE-Era-EngA-EngB-Septin-like GTPase superfamily. TrmE GTPase family. In terms of assembly, homodimer. Heterotetramer of two MnmE and two MnmG subunits. Requires K(+) as cofactor.

Its subcellular location is the cytoplasm. Functionally, exhibits a very high intrinsic GTPase hydrolysis rate. Involved in the addition of a carboxymethylaminomethyl (cmnm) group at the wobble position (U34) of certain tRNAs, forming tRNA-cmnm(5)s(2)U34. The polypeptide is tRNA modification GTPase MnmE (Actinobacillus succinogenes (strain ATCC 55618 / DSM 22257 / CCUG 43843 / 130Z)).